The primary structure comprises 212 residues: Uridine kinase (212 aa).

13–20 contributes to the ATP binding site; sequence GGSGSGKT.

Belongs to the uridine kinase family.

The protein resides in the cytoplasm. It catalyses the reaction uridine + ATP = UMP + ADP + H(+). It carries out the reaction cytidine + ATP = CMP + ADP + H(+). It functions in the pathway pyrimidine metabolism; CTP biosynthesis via salvage pathway; CTP from cytidine: step 1/3. Its pathway is pyrimidine metabolism; UMP biosynthesis via salvage pathway; UMP from uridine: step 1/1. In Bacillus cereus (strain ATCC 10987 / NRS 248), this protein is Uridine kinase.